The sequence spans 118 residues: RNA guanine-N7 methyltransferase activating subunit (118 aa).

Position 2 is an N-acetylthreonine (T2). Residues 2-55 are interaction with RNMT; that stretch reads TDTAEAVPNFEEMFASRFTENDKEYQEYLKRPPESPPIVEEWNSRAGGNQRNRG. The segment at 30–118 is disordered; sequence LKRPPESPPI…YNQRPPYGYY (89 aa). A Phosphoserine modification is found at S36. Residues 36–42 carry the RNMT-activating domain motif; sequence SPPIVEE. Residues 45-56 are compositionally biased toward low complexity; it reads SRAGGNQRNRGN. The interval 56 to 118 is RNA-binding; that stretch reads NRLQDNRQFR…YNQRPPYGYY (63 aa). Residues 57 to 70 show a composition bias toward basic and acidic residues; it reads RLQDNRQFRGRDNR. Positions 76–93 are enriched in polar residues; the sequence is DNRSNQWHGRSWGNNYPQ. R85 is modified (omega-N-methylarginine). A Phosphoserine modification is found at S86. Low complexity predominate over residues 98–109; that stretch reads PYYPQQYGHYGY.

Belongs to the RAM family. Interacts with RNMT; this interaction enhances mRNA binding and cap methyltransferase activity.

The protein localises to the nucleus. Its function is as follows. Regulatory subunit of the mRNA-capping methyltransferase RNMT:RAMAC complex that methylates the N7 position of the added guanosine to the 5'-cap structure of mRNAs. Promotes the recruitment of the methyl donor, S-adenosyl-L-methionine, to RNMT. Regulates RNMT expression by a post-transcriptional stabilizing mechanism. Binds RNA. The sequence is that of RNA guanine-N7 methyltransferase activating subunit (RAMAC) from Pongo abelii (Sumatran orangutan).